The chain runs to 295 residues: Ribosome production factor 1 (295 aa).

Residues 24–47 (HEKNKERHTMRRKRAKEERENPEL) are disordered. Basic and acidic residues predominate over residues 38–47 (AKEERENPEL). Residues 93–276 (PKIFLTTNVN…LKRLQRGIKE (184 aa)) form the Brix domain. The RNA-binding stretch occupies residues 254–271 (VGLQELGPQFTLKLKRLQ).

Part of a complex that includes BRX1, RPF1, RPF2 and SSF1 or SSF2.

It localises to the nucleus. The protein localises to the nucleolus. In terms of biological role, essential protein. Required for biogenesis of the 60S ribosomal subunit. In Saccharomyces cerevisiae (strain ATCC 204508 / S288c) (Baker's yeast), this protein is Ribosome production factor 1 (RPF1).